The chain runs to 872 residues: Valine--tRNA ligase (872 aa).

The short motif at 45–55 is the 'HIGH' region element; it reads PYPTGNLHIGN. The short motif at 524–528 is the 'KMSKS' region element; it reads KMSKS. ATP is bound at residue Lys527.

Belongs to the class-I aminoacyl-tRNA synthetase family. ValS type 2 subfamily.

The protein localises to the cytoplasm. The enzyme catalyses tRNA(Val) + L-valine + ATP = L-valyl-tRNA(Val) + AMP + diphosphate. Functionally, catalyzes the attachment of valine to tRNA(Val). As ValRS can inadvertently accommodate and process structurally similar amino acids such as threonine, to avoid such errors, it has a 'posttransfer' editing activity that hydrolyzes mischarged Thr-tRNA(Val) in a tRNA-dependent manner. The polypeptide is Valine--tRNA ligase (Natronomonas pharaonis (strain ATCC 35678 / DSM 2160 / CIP 103997 / JCM 8858 / NBRC 14720 / NCIMB 2260 / Gabara) (Halobacterium pharaonis)).